The following is a 551-amino-acid chain: Glucans biosynthesis protein D (551 aa).

A signal peptide (tat-type signal) is located at residues 1-32 (MNRRRFIKASLALAAACGTPGLATLFSRNAWA).

This sequence belongs to the OpgD/OpgG family. Predicted to be exported by the Tat system. The position of the signal peptide cleavage has not been experimentally proven.

The protein localises to the periplasm. It participates in glycan metabolism; osmoregulated periplasmic glucan (OPG) biosynthesis. In terms of biological role, probably involved in the control of the structural glucose backbone of osmoregulated periplasmic glucans (OPGs). This chain is Glucans biosynthesis protein D, found in Cronobacter sakazakii (strain ATCC BAA-894) (Enterobacter sakazakii).